A 359-amino-acid polypeptide reads, in one-letter code: Archaemetzincin-2 (359 aa).

Position 254 (His-254) interacts with Zn(2+). Residue Glu-255 is the Proton acceptor of the active site. Zn(2+) contacts are provided by His-258, His-264, Cys-265, Cys-270, Cys-289, and Cys-292.

It belongs to the peptidase M54 family. Requires Zn(2+) as cofactor.

Its function is as follows. Probable zinc metalloprotease. In Rattus norvegicus (Rat), this protein is Archaemetzincin-2 (Amz2).